We begin with the raw amino-acid sequence, 602 residues long: Fumarate reductase flavoprotein subunit (602 aa).

FAD-binding positions include 12–16 (GAGGA), 36–38 (ISK), 44–52 (SHTVAAEGG), 156–158 (HFV), 192–193 (AT), and aspartate 212. Histidine 45 is modified (tele-8alpha-FAD histidine). Catalysis depends on residues histidine 233 and arginine 249. Residues 356–357 (HY), glutamate 380, and 391–397 (RLGSNSL) contribute to the FAD site. The segment at 581-602 (YGGEADAADKAEAANKKEKANG) is disordered. Basic and acidic residues predominate over residues 587-602 (AADKAEAANKKEKANG).

This sequence belongs to the FAD-dependent oxidoreductase 2 family. FRD/SDH subfamily. Part of an enzyme complex containing four subunits: a flavoprotein (FrdA), an iron-sulfur protein (FrdB), and two hydrophobic anchor proteins (FrdC and FrdD). Can be cross-linked to SdhE. Purified from membrane fractions associated with protoporphyrinogen IX dehydrogenase (hemG). The cofactor is FAD.

It localises to the cell inner membrane. The enzyme catalyses a quinone + succinate = fumarate + a quinol. It carries out the reaction a menaquinone + succinate = a menaquinol + fumarate. With respect to regulation, inhibited by oxaloacetate, a substrate analog. Functionally, two distinct, membrane-bound, FAD-containing enzymes are responsible for the catalysis of fumarate and succinate interconversion; fumarate reductase is used during anaerobic growth, and succinate dehydrogenase is used during aerobic growth. The QFR enzyme complex binds 2 quinones in or near the membrane; 1 near the [3Fe-4S] cluster (QP is proximal to the [3Fe-4S] cluster, on the cytoplasmic side of the membrane) while QD (the distal cluster) is on the other side of the membrane. It is not clear if both of the quinol-binding sites are functionally relevant. The protein is Fumarate reductase flavoprotein subunit (frdA) of Escherichia coli (strain K12).